The chain runs to 93 residues: MSRMVQCVKLGHEAEGLDRPPYPGALGARIYQEVSKEAWQGWLKHQTMLINEYRLSPIDPKSRTFLEKQMEAYFFGDGAQSPEGYVPPAPQDS.

This sequence belongs to the Fe(2+)-trafficking protein family.

In terms of biological role, could be a mediator in iron transactions between iron acquisition and iron-requiring processes, such as synthesis and/or repair of Fe-S clusters in biosynthetic enzymes. The chain is Probable Fe(2+)-trafficking protein from Acidithiobacillus ferrooxidans (strain ATCC 23270 / DSM 14882 / CIP 104768 / NCIMB 8455) (Ferrobacillus ferrooxidans (strain ATCC 23270)).